Reading from the N-terminus, the 464-residue chain is ATP synthase subunit beta (464 aa).

148 to 155 (GGAGVGKT) lines the ATP pocket.

Belongs to the ATPase alpha/beta chains family. As to quaternary structure, F-type ATPases have 2 components, CF(1) - the catalytic core - and CF(0) - the membrane proton channel. CF(1) has five subunits: alpha(3), beta(3), gamma(1), delta(1), epsilon(1). CF(0) has three main subunits: a(1), b(2) and c(9-12). The alpha and beta chains form an alternating ring which encloses part of the gamma chain. CF(1) is attached to CF(0) by a central stalk formed by the gamma and epsilon chains, while a peripheral stalk is formed by the delta and b chains.

Its subcellular location is the cell inner membrane. The catalysed reaction is ATP + H2O + 4 H(+)(in) = ADP + phosphate + 5 H(+)(out). Its function is as follows. Produces ATP from ADP in the presence of a proton gradient across the membrane. The catalytic sites are hosted primarily by the beta subunits. The sequence is that of ATP synthase subunit beta from Marinobacter nauticus (strain ATCC 700491 / DSM 11845 / VT8) (Marinobacter aquaeolei).